The following is a 181-amino-acid chain: Oligoribonuclease (181 aa).

In terms of domain architecture, Exonuclease spans 8–171 (LIWIDLEMTG…DDIRESVAEL (164 aa)). Tyr129 is a catalytic residue.

The protein belongs to the oligoribonuclease family.

Its subcellular location is the cytoplasm. Functionally, 3'-to-5' exoribonuclease specific for small oligoribonucleotides. This Shigella flexneri protein is Oligoribonuclease.